An 80-amino-acid chain; its full sequence is Adipogenin (80 aa).

The helical transmembrane segment at 16 to 36 threads the bilayer; the sequence is FLVFWLCLPVALLLFLTIVWL. Phosphoserine is present on Ser-63.

The protein belongs to the adipogenin family. Selectively expressed in adipose tissue where it is particularly enriched in brown adipose tissue. In adipose tissue, expressed exclusively in adipocytes and not in the stromal-vascular cell population. Expressed at much lower levels in heart, stomach and muscle and barely detected in kidney and lung.

It localises to the membrane. The protein resides in the nucleus. Functionally, plays a role in stimulating adipocyte differentiation and development. The sequence is that of Adipogenin (Adig) from Mus musculus (Mouse).